Reading from the N-terminus, the 228-residue chain is uncharacterized protein (228 aa).

The tract at residues 194–228 is disordered; that stretch reads SRRADEHPAPSTEPHAAAVAPEPDFMAEPIPALEE.

This is an uncharacterized protein from Treponema pallidum (strain Nichols).